A 186-amino-acid polypeptide reads, in one-letter code: Probable peptidyl-tRNA hydrolase 2 (186 aa).

The protein belongs to the PTH2 family.

The enzyme catalyses an N-acyl-L-alpha-aminoacyl-tRNA + H2O = an N-acyl-L-amino acid + a tRNA + H(+). The natural substrate for this enzyme may be peptidyl-tRNAs which drop off the ribosome during protein synthesis. The sequence is that of Probable peptidyl-tRNA hydrolase 2 from Drosophila melanogaster (Fruit fly).